The chain runs to 395 residues: RNA polymerase II elongation factor ELL3 (395 aa).

4 disordered regions span residues 124–149 (SSLQRHNRTEDARDRESWQNVGDYPE), 163–182 (VPDPLASSQGQSLPGSSREH), 194–218 (LPNRDPDQALPPSASQKHVDKKRPA), and 233–279 (LAPS…SLSP). The segment covering 130 to 140 (NRTEDARDRES) has biased composition (basic and acidic residues). The span at 168-177 (ASSQGQSLPG) shows a compositional bias: polar residues. The segment covering 246–258 (LQEEDWEQEDKDE) has biased composition (acidic residues). A compositionally biased stretch (polar residues) spans 268–277 (PSVQADSESL). One can recognise an OCEL domain in the interval 283–393 (PDYLLQYRAI…LILEFEEKNR (111 aa)).

This sequence belongs to the ELL/occludin family. Interacts with AFF4. Component of the super elongation complex (SEC), at least composed of EAF1, EAF2, CDK9, MLLT3/AF9, AFF (AFF1 or AFF4), the P-TEFb complex and ELL (ELL, ELL2 or ELL3). Component of the little elongation complex (LEC), at least composed of ELL (ELL, ELL2 or ELL3), ZC3H8, ICE1 and ICE2.

Its subcellular location is the nucleus. In terms of biological role, enhancer-binding elongation factor that specifically binds enhancers in embryonic stem cells (ES cells), marks them, and is required for their future activation during stem cell specification. Elongation factor component of the super elongation complex (SEC), a complex required to increase the catalytic rate of RNA polymerase II transcription by suppressing transient pausing by the polymerase at multiple sites along the DNA. Component of the little elongation complex (LEC), a complex required to regulate small nuclear RNA (snRNA) gene transcription by RNA polymerase II and III. Does not only bind to enhancer regions of active genes, but also marks the enhancers that are in a poised or inactive state in ES cells and is required for establishing proper RNA polymerase II occupancy at developmentally regulated genes in a cohesin-dependent manner. Probably required for priming developmentally regulated genes for later recruitment of the super elongation complex (SEC), for transcriptional activation during differentiation. Required for recruitment of P-TEFb within SEC during differentiation. Probably preloaded on germ cell chromatin, suggesting that it may prime gene activation by marking enhancers as early as in the germ cells. Promoting epithelial-mesenchymal transition (EMT). This chain is RNA polymerase II elongation factor ELL3 (ELL3), found in Bos taurus (Bovine).